Here is a 25-residue protein sequence, read N- to C-terminus: Small ribosomal subunit protein eS32 (25 aa).

The interval 1–25 (MRAKWRKKRVRRLKRKRRKTRARSK) is disordered.

The protein belongs to the eukaryotic ribosomal protein eS32 family. Component of the small ribosomal subunit.

The protein is Small ribosomal subunit protein eS32 (RPL41) of Quercus suber (Cork oak).